Reading from the N-terminus, the 369-residue chain is MELATTGKVNEVLFMNRGEGESSYAQNSSFTQQVASMATLALENAVETLFSKDFHLQALNATDLGCAAGPNTFAVISTIKRMMEKKCRELNCQTLELQVYLNDLFGNDFNTLFKGLSSEVIGNKCEEVPCYVMGVPGSFHGRLFPRNSLHLVHSSYSVHWLTQAPKGLTNREGLALNKGKIYISKTSPPIVREAYLSQFHEDFTMFLNARSQEVVPNGCMVLILRGRQSSDPSDMQSCFTWELLAIAIAELVSQGLIDEDKLDTFNIPCYFPSLEEVKDIVERDGSFTIDHMEGFELDSLQMQENDKWVRGENFTKVVRAFTEPIISNQFGHEIMDKLYDKFTHIVVSDLEAKLPKTTSIILVLSKIDG.

Y24 contacts S-adenosyl-L-homocysteine. Residue T31 coordinates caffeine. Residues C66, N71, D103, L104, S138, and F139 each contribute to the S-adenosyl-L-homocysteine site. Residues Y156, H159, and W160 each coordinate caffeine. Residue N177 coordinates Mg(2+). Residue R225 participates in caffeine binding. Mg(2+)-binding residues include D263, F265, and N266. F321 is a caffeine binding site.

Belongs to the methyltransferase superfamily. Type-7 methyltransferase family. The cofactor is Mg(2+).

The enzyme catalyses theobromine + S-adenosyl-L-methionine = caffeine + S-adenosyl-L-homocysteine + H(+). It carries out the reaction 7-methylxanthine + S-adenosyl-L-methionine = theobromine + S-adenosyl-L-homocysteine + H(+). Its pathway is alkaloid biosynthesis. In terms of biological role, involved in the biosynthesis of caffeine. Catalyzes the conversion of 7-methylxanthine (7mX) to theobromine and of theobromine to caffeine. This is Caffeine synthase 1 from Camellia crassicolumna (Evergreen tea).